Consider the following 632-residue polypeptide: Arginine--tRNA ligase (632 aa).

Residues 120–130 carry the 'HIGH' region motif; the sequence is ANPIHPLHIGH.

This sequence belongs to the class-I aminoacyl-tRNA synthetase family.

Its subcellular location is the cytoplasm. The catalysed reaction is tRNA(Arg) + L-arginine + ATP = L-arginyl-tRNA(Arg) + AMP + diphosphate. The chain is Arginine--tRNA ligase from Pyrobaculum islandicum (strain DSM 4184 / JCM 9189 / GEO3).